We begin with the raw amino-acid sequence, 146 residues long: Hemoglobin subunit beta (146 aa).

The Globin domain maps to 2–146; it reads HWTAEEKQLI…VAHALARKYH (145 aa). Residues H63 and H92 each coordinate heme b.

Belongs to the globin family. Heterotetramer of two alpha chains and two beta chains. In terms of tissue distribution, red blood cells.

Functionally, involved in oxygen transport from the lung to the various peripheral tissues. The chain is Hemoglobin subunit beta (HBB) from Aquila chrysaetos (Golden eagle).